Reading from the N-terminus, the 460-residue chain is MAMLWLAVLLTCGAPAALLPTSGVGCPSRCDPASCAPAPTNCPAGETALRCGCCPVCAAAEWERCGEGPEDPLCASGLRCVKNGGVARCQCPSNLPVCGSDGKTYPSLCRLQAESKAAQGKGSAAIIPIQRGDCQQGQRDPDSPRYKYNFIADVVEKIAPAVVHIELFRMLPFFKREVPAASGSGFIVSEDGLILTNAHVVTNKHRLKVERSDGSTYDAQIIDVDEKADIALIKIKAKGKLPVLLLGRSEDLRPGEFVVAIGSPFSLQNTVTTGIVSTAQRGGKELGLRNSDMDYIQTDAIINYGNSGGPLVNLDGEVIGINTLKVTAGISFAIPSDKIRKFLAESHNRQSTGQGTKKKKYLGIRMMSLSQGKLKELKEQVKDFPENTSGAYIVEVIPDTPAEEAGLKEGDIIISIGGKSVTSSSDVSDAIKKEGTTLHLVIRRGNEDIPISVTPKEIEF.

The signal sequence occupies residues 1-18; sequence MAMLWLAVLLTCGAPAAL. The IGFBP N-terminal domain maps to 22–92; it reads SGVGCPSRCD…NGGVARCQCP (71 aa). 8 disulfides stabilise this stretch: Cys-26–Cys-51, Cys-30–Cys-53, Cys-35–Cys-54, Cys-42–Cys-57, Cys-65–Cys-80, Cys-74–Cys-89, Cys-91–Cys-109, and Cys-98–Cys-134. Positions 74–136 constitute a Kazal-like domain; that stretch reads CASGLRCVKN…IPIQRGDCQQ (63 aa). The serine protease stretch occupies residues 183–343; it reads GSGFIVSEDG…IPSDKIRKFL (161 aa). Catalysis depends on charge relay system residues His-199, Asp-229, and Ser-307. One can recognise a PDZ domain in the interval 344 to 447; sequence AESHNRQSTG…LHLVIRRGNE (104 aa).

It belongs to the peptidase S1C family. Forms homotrimers. In the presence of substrate, may form higher-order multimers in a PDZ-independent manner.

The protein localises to the cell membrane. The protein resides in the secreted. It localises to the cytoplasm. Its subcellular location is the cytosol. Its function is as follows. Serine protease with a variety of targets, including extracellular matrix proteins and proteoglycans such as biglycan, syndecan-4 and glypican-4. Through cleavage of proteoglycans, may release soluble FGF-glycosaminoglycan complexes that promote the range and intensity of FGF signals in the extracellular space. Consequently, facilitates inductive processes in the developing embryo, such as posteriorization, mesoderm induction and neuronal differentiation. Regulates the availability of insulin-like growth factors (IGFs) by cleaving IGF-binding proteins. Inhibits signaling mediated by TGF-beta family members. Consequently, may regulate many physiological processes. Intracellularly, degrades TSC2, leading to the activation of TSC2 downstream targets. The protein is Serine protease HTRA1 (htra1) of Xenopus tropicalis (Western clawed frog).